We begin with the raw amino-acid sequence, 102 residues long: Small ribosomal subunit protein uS10 (102 aa).

This sequence belongs to the universal ribosomal protein uS10 family. In terms of assembly, part of the 30S ribosomal subunit.

In terms of biological role, involved in the binding of tRNA to the ribosomes. The sequence is that of Small ribosomal subunit protein uS10 from Gluconacetobacter diazotrophicus (strain ATCC 49037 / DSM 5601 / CCUG 37298 / CIP 103539 / LMG 7603 / PAl5).